The chain runs to 131 residues: Holo-[acyl-carrier-protein] synthase (131 aa).

2 residues coordinate Mg(2+): Asp8 and Glu63.

The protein belongs to the P-Pant transferase superfamily. AcpS family. It depends on Mg(2+) as a cofactor.

The protein resides in the cytoplasm. The enzyme catalyses apo-[ACP] + CoA = holo-[ACP] + adenosine 3',5'-bisphosphate + H(+). In terms of biological role, transfers the 4'-phosphopantetheine moiety from coenzyme A to a Ser of acyl-carrier-protein. This Shewanella piezotolerans (strain WP3 / JCM 13877) protein is Holo-[acyl-carrier-protein] synthase.